The primary structure comprises 525 residues: uncharacterized protein (525 aa).

Transmembrane regions (helical) follow at residues 7–29 (FLAT…LGQI), 34–51 (LRFG…VGAL), 64–82 (GLGV…GSTF), 92–114 (LMLA…GRLF), 121–143 (VAGL…ATHG), and 148–170 (LVGY…AIIA). 2 consecutive RCK C-terminal domains span residues 178–257 (KDNT…LGHV) and 259–341 (ERTL…LFGD). 5 consecutive transmembrane segments (helical) span residues 351–370 (ALSL…LMVA), 374–396 (GLQF…GSIH), 416–438 (LGLM…SQAV), 443–465 (LAVI…AAAW), and 502–524 (SAYG…VIVL).

This sequence belongs to the AAE transporter (TC 2.A.81) family.

It is found in the cell membrane. This is an uncharacterized protein from Cutibacterium acnes (strain DSM 16379 / KPA171202) (Propionibacterium acnes).